Reading from the N-terminus, the 485-residue chain is Protein DETOXIFICATION 14 (485 aa).

12 helical membrane passes run leucine 30–isoleucine 50, isoleucine 68–leucine 88, isoleucine 112–isoleucine 132, glycine 147–valine 167, leucine 175–tryptophan 195, glycine 207–methionine 227, alanine 259–leucine 279, valine 288–alanine 308, alanine 329–phenylalanine 349, methionine 372–valine 392, valine 405–phenylalanine 425, and leucine 432–isoleucine 452.

This sequence belongs to the multi antimicrobial extrusion (MATE) (TC 2.A.66.1) family.

It localises to the membrane. This is Protein DETOXIFICATION 14 from Arabidopsis thaliana (Mouse-ear cress).